The following is a 945-amino-acid chain: Isoleucine--tRNA ligase (945 aa).

Residues 66-76 carry the 'HIGH' region motif; that stretch reads PYANGDIHLGH. E581 is a binding site for L-isoleucyl-5'-AMP. Residues 622–626 carry the 'KMSKS' region motif; that stretch reads KMSKS. Residue K625 participates in ATP binding. Zn(2+) is bound by residues C908, C911, C928, and C931.

It belongs to the class-I aminoacyl-tRNA synthetase family. IleS type 1 subfamily. As to quaternary structure, monomer. Requires Zn(2+) as cofactor.

Its subcellular location is the cytoplasm. It carries out the reaction tRNA(Ile) + L-isoleucine + ATP = L-isoleucyl-tRNA(Ile) + AMP + diphosphate. Its function is as follows. Catalyzes the attachment of isoleucine to tRNA(Ile). As IleRS can inadvertently accommodate and process structurally similar amino acids such as valine, to avoid such errors it has two additional distinct tRNA(Ile)-dependent editing activities. One activity is designated as 'pretransfer' editing and involves the hydrolysis of activated Val-AMP. The other activity is designated 'posttransfer' editing and involves deacylation of mischarged Val-tRNA(Ile). This is Isoleucine--tRNA ligase from Burkholderia cenocepacia (strain HI2424).